The sequence spans 343 residues: Dimethyladenosine transferase 1, mitochondrial (343 aa).

A mitochondrion-targeting transit peptide spans 1–27 (MAASGKLSTWRLPPLPTIREIIKLLRV). S-adenosyl-L-methionine contacts are provided by L38, G63, E85, K86, D111, V112, and N141.

The protein belongs to the class I-like SAM-binding methyltransferase superfamily. rRNA adenine N(6)-methyltransferase family. KsgA subfamily. As to quaternary structure, interacts with mitochondrial RNA polymerase POLRMT. Interacts with TFAM. Bound to the maturing mtSSU until the late stages of assembly.

It localises to the mitochondrion. The enzyme catalyses adenosine(N)/adenosine(N+1) in rRNA + 4 S-adenosyl-L-methionine = N(6)-dimethyladenosine(N)/N(6)-dimethyladenosine(N+1) in rRNA + 4 S-adenosyl-L-homocysteine + 4 H(+). In terms of biological role, S-adenosyl-L-methionine-dependent methyltransferase which specifically dimethylates mitochondrial 12S rRNA at the conserved stem loop. Also required for basal transcription of mitochondrial DNA, probably via its interaction with POLRMT and TFAM. Stimulates transcription independently of the methyltransferase activity. Its function is as follows. Mitochondrial methyltransferase which uses S-adenosyl methionine to dimethylate two highly conserved adjacent adenosine residues (A1583 and A1584) within the loop of helix 45 at the 3-prime end of 12S rRNA, thereby regulating the assembly or stability of the small subunit of the mitochondrial ribosome. Also required for basal transcription of mitochondrial DNA, probably via its interaction with POLRMT and TFAM. Stimulates transcription independently of the methyltransferase activity. The sequence is that of Dimethyladenosine transferase 1, mitochondrial (TFB1M) from Pongo abelii (Sumatran orangutan).